Consider the following 213-residue polypeptide: MSFSDFSKVESIKSLNEFLADKSYIDGTTATQADVTVYKAFQKEFPQFTRWFNHIASFTEEFEDLPAGKAPAASGSAAAAAEEEDDEDVDLFGSDDEVDEEAEKLKQQRLAEYAAKKAAKGPKPAAKSIVTLDVKPWDDETDLDELLTNVKAIEMEGLTWGAHQWIPVGFGIKKLQINLVVEDALVSLDDLQAAVEEDEDHVQSTDIAAMQKL.

Residues 67–80 show a composition bias toward low complexity; it reads AGKAPAASGSAAAA. Positions 67 to 88 are disordered; it reads AGKAPAASGSAAAAAEEEDDED.

It belongs to the EF-1-beta/EF-1-delta family. EF-1 is composed of 4 subunits: alpha, beta, delta, and gamma.

EF-1-beta and EF-1-delta stimulate the exchange of GDP bound to EF-1-alpha to GTP. The polypeptide is Elongation factor 1-beta (EFB1) (Candida albicans (strain WO-1) (Yeast)).